A 214-amino-acid chain; its full sequence is Ribosomal RNA small subunit methyltransferase G (214 aa).

S-adenosyl-L-methionine contacts are provided by residues glycine 78, leucine 83, alanine 129–glutamate 130, and arginine 144.

This sequence belongs to the methyltransferase superfamily. RNA methyltransferase RsmG family.

It localises to the cytoplasm. The catalysed reaction is guanosine(527) in 16S rRNA + S-adenosyl-L-methionine = N(7)-methylguanosine(527) in 16S rRNA + S-adenosyl-L-homocysteine. Specifically methylates the N7 position of guanine in position 527 of 16S rRNA. In Marinobacter nauticus (strain ATCC 700491 / DSM 11845 / VT8) (Marinobacter aquaeolei), this protein is Ribosomal RNA small subunit methyltransferase G.